A 97-amino-acid chain; its full sequence is Defensin-like protein 301 (97 aa).

A signal peptide spans 1-24; sequence MEKVTSIFFVLLLISSCLILRSQG. Cystine bridges form between Cys28-Cys47, Cys34-Cys53, Cys39-Cys55, Cys65-Cys84, Cys71-Cys92, and Cys76-Cys94.

Belongs to the DEFL family.

It localises to the secreted. This chain is Defensin-like protein 301, found in Arabidopsis thaliana (Mouse-ear cress).